A 60-amino-acid chain; its full sequence is MVHVLERALLEQQSSACGLPGSSTETRPSHPCPEDPDVSRLRLLLVVLCVLFGLLCLLLI.

The span at 14–26 (SSACGLPGSSTET) shows a compositional bias: polar residues. Residues 14–34 (SSACGLPGSSTETRPSHPCPE) are disordered. A helical membrane pass occupies residues 41–59 (LRLLLVVLCVLFGLLCLLL).

This sequence belongs to the lymphocryptovirus BNLF2a family. Interacts with host TAP1 and TAP2.

The protein localises to the host endoplasmic reticulum membrane. In terms of biological role, participates in viral evasion from HLA class I-restricted T-cell immunity. Associates with host TAP1 and TAP2 and prevents TAP-mediated peptide transport and subsequent loading. The protein is Protein BNLF2a of Homo sapiens (Human).